The primary structure comprises 327 residues: tRNA uridine(34) hydroxylase (327 aa).

Positions Gln-122–Trp-218 constitute a Rhodanese domain. Cys-178 functions as the Cysteine persulfide intermediate in the catalytic mechanism.

Belongs to the TrhO family.

The enzyme catalyses uridine(34) in tRNA + AH2 + O2 = 5-hydroxyuridine(34) in tRNA + A + H2O. Catalyzes oxygen-dependent 5-hydroxyuridine (ho5U) modification at position 34 in tRNAs. The protein is tRNA uridine(34) hydroxylase of Chlamydia trachomatis serovar L2 (strain ATCC VR-902B / DSM 19102 / 434/Bu).